We begin with the raw amino-acid sequence, 326 residues long: Tetraacyldisaccharide 4'-kinase (326 aa).

Residue 55–62 (TAGGNGKT) coordinates ATP.

This sequence belongs to the LpxK family.

The catalysed reaction is a lipid A disaccharide + ATP = a lipid IVA + ADP + H(+). It functions in the pathway glycolipid biosynthesis; lipid IV(A) biosynthesis; lipid IV(A) from (3R)-3-hydroxytetradecanoyl-[acyl-carrier-protein] and UDP-N-acetyl-alpha-D-glucosamine: step 6/6. Functionally, transfers the gamma-phosphate of ATP to the 4'-position of a tetraacyldisaccharide 1-phosphate intermediate (termed DS-1-P) to form tetraacyldisaccharide 1,4'-bis-phosphate (lipid IVA). The sequence is that of Tetraacyldisaccharide 4'-kinase from Erwinia tasmaniensis (strain DSM 17950 / CFBP 7177 / CIP 109463 / NCPPB 4357 / Et1/99).